Reading from the N-terminus, the 212-residue chain is Thiamine-phosphate synthase (212 aa).

4-amino-2-methyl-5-(diphosphooxymethyl)pyrimidine is bound by residues 40-44 and Asn75; that span reads QFREK. Residues Asp76 and Asp95 each coordinate Mg(2+). Position 113 (Ser113) interacts with 4-amino-2-methyl-5-(diphosphooxymethyl)pyrimidine. 139–141 is a binding site for 2-[(2R,5Z)-2-carboxy-4-methylthiazol-5(2H)-ylidene]ethyl phosphate; that stretch reads TIS. Residue Lys142 participates in 4-amino-2-methyl-5-(diphosphooxymethyl)pyrimidine binding. Residues Gly171 and 191-192 each bind 2-[(2R,5Z)-2-carboxy-4-methylthiazol-5(2H)-ylidene]ethyl phosphate; that span reads IS.

The protein belongs to the thiamine-phosphate synthase family. It depends on Mg(2+) as a cofactor.

The catalysed reaction is 2-[(2R,5Z)-2-carboxy-4-methylthiazol-5(2H)-ylidene]ethyl phosphate + 4-amino-2-methyl-5-(diphosphooxymethyl)pyrimidine + 2 H(+) = thiamine phosphate + CO2 + diphosphate. It catalyses the reaction 2-(2-carboxy-4-methylthiazol-5-yl)ethyl phosphate + 4-amino-2-methyl-5-(diphosphooxymethyl)pyrimidine + 2 H(+) = thiamine phosphate + CO2 + diphosphate. It carries out the reaction 4-methyl-5-(2-phosphooxyethyl)-thiazole + 4-amino-2-methyl-5-(diphosphooxymethyl)pyrimidine + H(+) = thiamine phosphate + diphosphate. The protein operates within cofactor biosynthesis; thiamine diphosphate biosynthesis; thiamine phosphate from 4-amino-2-methyl-5-diphosphomethylpyrimidine and 4-methyl-5-(2-phosphoethyl)-thiazole: step 1/1. Condenses 4-methyl-5-(beta-hydroxyethyl)thiazole monophosphate (THZ-P) and 2-methyl-4-amino-5-hydroxymethyl pyrimidine pyrophosphate (HMP-PP) to form thiamine monophosphate (TMP). This is Thiamine-phosphate synthase from Staphylococcus haemolyticus (strain JCSC1435).